We begin with the raw amino-acid sequence, 173 residues long: NADH-ubiquinone oxidoreductase chain 6 (173 aa).

5 helical membrane-spanning segments follow: residues 1-21, 24-44, 53-73, 87-107, and 141-161; these read MTYL…AVAS, APYF…GVLV, LVLF…SAAL, VLGY…LFWG, and GGML…VLEL.

It belongs to the complex I subunit 6 family.

It is found in the mitochondrion membrane. It catalyses the reaction a ubiquinone + NADH + 5 H(+)(in) = a ubiquinol + NAD(+) + 4 H(+)(out). Functionally, core subunit of the mitochondrial membrane respiratory chain NADH dehydrogenase (Complex I) that is believed to belong to the minimal assembly required for catalysis. Complex I functions in the transfer of electrons from NADH to the respiratory chain. The immediate electron acceptor for the enzyme is believed to be ubiquinone. The sequence is that of NADH-ubiquinone oxidoreductase chain 6 (MT-ND6) from Oncorhynchus mykiss (Rainbow trout).